The sequence spans 171 residues: Peptide methionine sulfoxide reductase MsrA (171 aa).

The active site involves cysteine 13.

Belongs to the MsrA Met sulfoxide reductase family.

It catalyses the reaction L-methionyl-[protein] + [thioredoxin]-disulfide + H2O = L-methionyl-(S)-S-oxide-[protein] + [thioredoxin]-dithiol. The enzyme catalyses [thioredoxin]-disulfide + L-methionine + H2O = L-methionine (S)-S-oxide + [thioredoxin]-dithiol. Its function is as follows. Has an important function as a repair enzyme for proteins that have been inactivated by oxidation. Catalyzes the reversible oxidation-reduction of methionine sulfoxide in proteins to methionine. In Mycobacterium ulcerans (strain Agy99), this protein is Peptide methionine sulfoxide reductase MsrA.